Consider the following 71-residue polypeptide: Arrestin-D (71 aa).

The protein belongs to the arrestin family. In terms of tissue distribution, adrenal, cerebral cortex, heart, liver, lung, pituitary and testis.

This chain is Arrestin-D (Dar), found in Rattus norvegicus (Rat).